Here is a 180-residue protein sequence, read N- to C-terminus: UPF0149 protein XAC3406 (180 aa).

It belongs to the UPF0149 family.

The sequence is that of UPF0149 protein XAC3406 from Xanthomonas axonopodis pv. citri (strain 306).